Here is a 446-residue protein sequence, read N- to C-terminus: Tubulin beta chain (446 aa).

GTP is bound by residues Q11, E69, S138, G142, T143, G144, N204, and N226. E69 lines the Mg(2+) pocket. The disordered stretch occupies residues Y422–E446. The span at G429–E446 shows a compositional bias: acidic residues.

This sequence belongs to the tubulin family. As to quaternary structure, dimer of alpha and beta chains. A typical microtubule is a hollow water-filled tube with an outer diameter of 25 nm and an inner diameter of 15 nM. Alpha-beta heterodimers associate head-to-tail to form protofilaments running lengthwise along the microtubule wall with the beta-tubulin subunit facing the microtubule plus end conferring a structural polarity. Microtubules usually have 13 protofilaments but different protofilament numbers can be found in some organisms and specialized cells. It depends on Mg(2+) as a cofactor.

The protein localises to the cytoplasm. It is found in the cytoskeleton. Functionally, tubulin is the major constituent of microtubules, a cylinder consisting of laterally associated linear protofilaments composed of alpha- and beta-tubulin heterodimers. Microtubules grow by the addition of GTP-tubulin dimers to the microtubule end, where a stabilizing cap forms. Below the cap, tubulin dimers are in GDP-bound state, owing to GTPase activity of alpha-tubulin. This is Tubulin beta chain (TUB2) from Gibberella zeae (strain ATCC MYA-4620 / CBS 123657 / FGSC 9075 / NRRL 31084 / PH-1) (Wheat head blight fungus).